A 64-amino-acid chain; its full sequence is SPbeta prophage-derived uncharacterized protein YopV (64 aa).

This is SPbeta prophage-derived uncharacterized protein YopV (yopV) from Bacillus subtilis (strain 168).